Here is a 1020-residue protein sequence, read N- to C-terminus: Contactin-1 (1020 aa).

A signal peptide spans 1–20 (MKMPLLVSHLLLISLTSCLG). 6 consecutive Ig-like C2-type domains span residues 41-131 (PIFE…ATLS), 137-223 (PFPP…KSVF), 241-326 (PADI…ARIY), 331-407 (PEWV…AELK), 413-500 (PTFE…GTLV), and 504-603 (PTRI…LVVR). Intrachain disulfides connect Cys-65-Cys-114 and Cys-158-Cys-211. N-linked (GlcNAc...) asparagine glycans are attached at residues Asn-208 and Asn-258. A disulfide bridge connects residues Cys-263 and Cys-310. Asn-338 is a glycosylation site (N-linked (GlcNAc...) asparagine). Cystine bridges form between Cys-352–Cys-391 and Cys-436–Cys-484. N-linked (GlcNAc...) asparagine glycans are attached at residues Asn-457, Asn-473, Asn-494, and Asn-521. A disulfide bridge connects residues Cys-526 and Cys-585. The N-linked (GlcNAc...) asparagine glycan is linked to Asn-593. 4 Fibronectin type-III domains span residues 608–706 (PPGG…TDGA), 711–808 (APSD…SAQD), 813–908 (APTE…APPS), and 909–1002 (QPPR…TLSS). Residues 695–719 (SIPSNRIKTDGAAPNVAPSDVGGGG) form a disordered region. Asn-935 carries N-linked (GlcNAc...) asparagine glycosylation. Ser-1001 carries the GPI-anchor amidated serine lipid modification. Residues 1002–1020 (SSLLSLLLPSLGFLVYSEF) constitute a propeptide, removed in mature form.

It belongs to the immunoglobulin superfamily. Contactin family. In terms of assembly, monomer. Interacts with CNTNAP1 in cis form. Binds to the carbonic-anhydrase like domain of PTPRZ1. Interacts with NOTCH1 and TNR. Detected in a complex with NRCAM and PTPRB. Interacts with TASOR. As to expression, expressed in the ovary and in Sertoli cells of the testis.

Its subcellular location is the cell membrane. Contactins mediate cell surface interactions during nervous system development. Involved in the formation of paranodal axo-glial junctions in myelinated peripheral nerves and in the signaling between axons and myelinating glial cells via its association with CNTNAP1. Participates in oligodendrocytes generation by acting as a ligand of NOTCH1. Its association with NOTCH1 promotes NOTCH1 activation through the released notch intracellular domain (NICD) and subsequent translocation to the nucleus. Interaction with TNR induces a repulsion of neurons and an inhibition of neurite outgrowth. The chain is Contactin-1 (Cntn1) from Mus musculus (Mouse).